Consider the following 130-residue polypeptide: Peptide methionine sulfoxide reductase MsrB (130 aa).

The region spanning 1–122 is the MsrB domain; sequence MKKREDMTEM…NSVSMAFEDS (122 aa). Residues C39, C42, C88, and C91 each contribute to the Zn(2+) site. Catalysis depends on C111, which acts as the Nucleophile.

This sequence belongs to the MsrB Met sulfoxide reductase family. The cofactor is Zn(2+).

The catalysed reaction is L-methionyl-[protein] + [thioredoxin]-disulfide + H2O = L-methionyl-(R)-S-oxide-[protein] + [thioredoxin]-dithiol. This Pasteurella multocida (strain Pm70) protein is Peptide methionine sulfoxide reductase MsrB.